Consider the following 557-residue polypeptide: Dihydroxy-acid dehydratase (557 aa).

A [2Fe-2S] cluster-binding site is contributed by cysteine 50. Aspartate 82 serves as a coordination point for Mg(2+). Residue cysteine 123 coordinates [2Fe-2S] cluster. The Mg(2+) site is built by aspartate 124 and lysine 125. N6-carboxylysine is present on lysine 125. A [2Fe-2S] cluster-binding site is contributed by cysteine 195. Glutamate 447 provides a ligand contact to Mg(2+). Serine 473 functions as the Proton acceptor in the catalytic mechanism.

It belongs to the IlvD/Edd family. As to quaternary structure, homodimer. [2Fe-2S] cluster serves as cofactor. Requires Mg(2+) as cofactor.

The catalysed reaction is (2R)-2,3-dihydroxy-3-methylbutanoate = 3-methyl-2-oxobutanoate + H2O. The enzyme catalyses (2R,3R)-2,3-dihydroxy-3-methylpentanoate = (S)-3-methyl-2-oxopentanoate + H2O. It participates in amino-acid biosynthesis; L-isoleucine biosynthesis; L-isoleucine from 2-oxobutanoate: step 3/4. The protein operates within amino-acid biosynthesis; L-valine biosynthesis; L-valine from pyruvate: step 3/4. Functions in the biosynthesis of branched-chain amino acids. Catalyzes the dehydration of (2R,3R)-2,3-dihydroxy-3-methylpentanoate (2,3-dihydroxy-3-methylvalerate) into 2-oxo-3-methylpentanoate (2-oxo-3-methylvalerate) and of (2R)-2,3-dihydroxy-3-methylbutanoate (2,3-dihydroxyisovalerate) into 2-oxo-3-methylbutanoate (2-oxoisovalerate), the penultimate precursor to L-isoleucine and L-valine, respectively. This chain is Dihydroxy-acid dehydratase, found in Nitrosomonas europaea (strain ATCC 19718 / CIP 103999 / KCTC 2705 / NBRC 14298).